Reading from the N-terminus, the 576-residue chain is Acetylcholine receptor subunit alpha-like 2 (576 aa).

The N-terminal stretch at 1 to 21 (MAPGCCTTRPRPIALLAHIWR) is a signal peptide. Over 22-261 (HCKPLCLLLV…FFNITLRRKT (240 aa)) the chain is Extracellular. N65 carries an N-linked (GlcNAc...) asparagine glycan. 2 disulfide bridges follow: C169–C183 and C243–C244. A glycan (N-linked (GlcNAc...) asparagine) is linked at N254. 3 consecutive transmembrane segments (helical) span residues 262–285 (LFYT…VFYL), 293–311 (IALC…LLIS), and 327–346 (YLLF…IIIL). At 347–526 (NIHYRKPSTH…WGFVAMVMDR (180 aa)) the chain is on the cytoplasmic side. The chain crosses the membrane as a helical span at residues 527 to 545 (LFLWLFMIASLVGTFVILG). Residue N570 is glycosylated (N-linked (GlcNAc...) asparagine).

The protein belongs to the ligand-gated ion channel (TC 1.A.9) family. Acetylcholine receptor (TC 1.A.9.1) subfamily. CNS in embryos.

It is found in the postsynaptic cell membrane. Its subcellular location is the cell membrane. Its function is as follows. After binding acetylcholine, the AChR responds by an extensive change in conformation that affects all subunits and leads to opening of an ion-conducting channel across the plasma membrane. This chain is Acetylcholine receptor subunit alpha-like 2 (nAChRalpha2), found in Drosophila melanogaster (Fruit fly).